A 207-amino-acid chain; its full sequence is Vascular endothelial growth factor B (207 aa).

The N-terminal stretch at 1–21 (MSPLLRRLLLAALLQLAPAQA) is a signal peptide. 3 disulfides stabilise this stretch: cysteine 47–cysteine 89, cysteine 78–cysteine 122, and cysteine 82–cysteine 124. A compositionally biased stretch (basic and acidic residues) spans 122-139 (CECRPKKKDSAVKPDRAA). The disordered stretch occupies residues 122-207 (CECRPKKKDS…AASSVAKGGA (86 aa)). Over residues 174 to 207 (PSAHAAPSTTSALTPGPAAAAADAAASSVAKGGA) the composition is skewed to low complexity.

Belongs to the PDGF/VEGF growth factor family. Homodimer; disulfide-linked. Can also form heterodimer with VEGF. Post-translationally, VEGF-B186 is O-glycosylated. As to expression, expressed in all tissues except liver. Highest levels found in heart, skeletal muscle and pancreas.

The protein localises to the secreted. Functionally, growth factor for endothelial cells. VEGF-B167 binds heparin and neuropilin-1 whereas the binding to neuropilin-1 of VEGF-B186 is regulated by proteolysis. The polypeptide is Vascular endothelial growth factor B (VEGFB) (Homo sapiens (Human)).